We begin with the raw amino-acid sequence, 199 residues long: MAP6 domain-containing protein 1 (199 aa).

3 S-palmitoyl cysteine lipidation sites follow: Cys-5, Cys-10, and Cys-11. The interval 33 to 110 (YSDLDSEEPG…SAQSSAPPAP (78 aa)) is disordered. The residue at position 38 (Ser-38) is a Phosphoserine. Mn stretches follow at residues 130–143 (TTSY…WTGV) and 165–177 (DSSP…VPEV). Ser-167 bears the Phosphoserine mark.

Belongs to the STOP family. As to quaternary structure, interacts with calmodulin. In terms of processing, palmitoylated. Palmitoylation enhances association with microtubules.

The protein localises to the golgi apparatus. The protein resides in the cytoplasm. It is found in the cytoskeleton. Functionally, may have microtubule-stabilizing activity. This chain is MAP6 domain-containing protein 1 (MAP6D1), found in Homo sapiens (Human).